The primary structure comprises 221 residues: MTNDPDAELIEAGRKLFAGDWQFFWASPSIETLPPMQGIEIALAGRSNVGKSSLINALTGRNALARTSHTPGRTQELIFFKGPGPLDAQTPELRLVDMPGYGYASAPKTKIASWTTLIHRYLLGRANLARVYVLIDSRHGFKDADDEVLTTLDKSAVSYQIVLTKTDQVKKSALDETMAAMAEKLRKHPAAYPEMLVTSSRDGAGMAEMRAAIVKLLRERA.

The EngB-type G domain maps to 37 to 219 (QGIEIALAGR…RAAIVKLLRE (183 aa)). Residues 45–52 (GRSNVGKS), 72–76 (GRTQE), 97–100 (DMPG), 164–167 (TKTD), and 198–200 (TSS) each bind GTP. Positions 52 and 74 each coordinate Mg(2+).

It belongs to the TRAFAC class TrmE-Era-EngA-EngB-Septin-like GTPase superfamily. EngB GTPase family. The cofactor is Mg(2+).

Its function is as follows. Necessary for normal cell division and for the maintenance of normal septation. This is Probable GTP-binding protein EngB from Afipia carboxidovorans (strain ATCC 49405 / DSM 1227 / KCTC 32145 / OM5) (Oligotropha carboxidovorans).